A 169-amino-acid polypeptide reads, in one-letter code: S-ribosylhomocysteine lyase (169 aa).

His-54, His-58, and Cys-128 together coordinate Fe cation.

This sequence belongs to the LuxS family. As to quaternary structure, homodimer. It depends on Fe cation as a cofactor.

The enzyme catalyses S-(5-deoxy-D-ribos-5-yl)-L-homocysteine = (S)-4,5-dihydroxypentane-2,3-dione + L-homocysteine. In terms of biological role, involved in the synthesis of autoinducer 2 (AI-2) which is secreted by bacteria and is used to communicate both the cell density and the metabolic potential of the environment. The regulation of gene expression in response to changes in cell density is called quorum sensing. Catalyzes the transformation of S-ribosylhomocysteine (RHC) to homocysteine (HC) and 4,5-dihydroxy-2,3-pentadione (DPD). The chain is S-ribosylhomocysteine lyase from Shewanella piezotolerans (strain WP3 / JCM 13877).